The sequence spans 388 residues: Sporulation-specific mitogen-activated protein kinase SMK1 (388 aa).

In terms of domain architecture, Protein kinase spans 38 to 337 (YEIIQFLGKG…VEQAISHPFL (300 aa)). Residues 44-52 (LGKGAYGTV) and Lys-69 contribute to the ATP site. Asp-166 acts as the Proton acceptor in catalysis. The TXY signature appears at 207 to 209 (TNY).

The protein belongs to the protein kinase superfamily. CMGC Ser/Thr protein kinase family. MAP kinase subfamily. In terms of assembly, interacts with GSC2. Mg(2+) serves as cofactor. In terms of processing, dually phosphorylated on Thr-207 and Tyr-209, which activates the enzyme.

The enzyme catalyses L-seryl-[protein] + ATP = O-phospho-L-seryl-[protein] + ADP + H(+). It catalyses the reaction L-threonyl-[protein] + ATP = O-phospho-L-threonyl-[protein] + ADP + H(+). With respect to regulation, activated by tyrosine and threonine phosphorylation. Required for spore wall assembly. Required for proper deposition of the two outer layers of the spore wall, the chitosan and dityrosine layers. Negatively regulates GSC2, an alternate catalytic subunit of the 1,3-beta-glucan synthase (GS). Participates in a developmentally regulated signal transduction pathway that coordinates cytodifferentiation events with the transcriptional program. The protein is Sporulation-specific mitogen-activated protein kinase SMK1 (SMK1) of Saccharomyces cerevisiae (strain ATCC 204508 / S288c) (Baker's yeast).